The chain runs to 329 residues: Carrier protein YMC2, mitochondrial (329 aa).

A disordered region spans residues 1–27 (MSEEFPTPQLLDELEDQQKVTTPNEKR). The N-terminal 33 residues, 1-33 (MSEEFPTPQLLDELEDQQKVTTPNEKRELSSNR), are a transit peptide targeting the mitochondrion. 3 Solcar repeats span residues 34 to 115 (VLKD…MKRF), 143 to 226 (SQYY…LVAR), and 238 to 325 (PPWK…VMRF). 6 helical membrane passes run 38–58 (IFAG…FDTT), 84–104 (VFAF…CVSV), 140–160 (LPLS…SFLA), 205–225 (TMIR…ALVA), 243–263 (CLFG…LDVV), and 297–318 (FFKG…TFLT).

The protein belongs to the mitochondrial carrier (TC 2.A.29) family.

It localises to the mitochondrion inner membrane. The polypeptide is Carrier protein YMC2, mitochondrial (YMC2) (Saccharomyces cerevisiae (strain ATCC 204508 / S288c) (Baker's yeast)).